The sequence spans 331 residues: Biotin synthase (331 aa).

In terms of domain architecture, Radical SAM core spans 52–277; it reads PEVEVEGIVS…RTILRYAGGR (226 aa). The [4Fe-4S] cluster site is built by Cys67, Cys71, and Cys74. [2Fe-2S] cluster contacts are provided by Cys110, Cys202, and Arg272.

It belongs to the radical SAM superfamily. Biotin synthase family. In terms of assembly, homodimer. The cofactor is [4Fe-4S] cluster. [2Fe-2S] cluster serves as cofactor.

The enzyme catalyses (4R,5S)-dethiobiotin + (sulfur carrier)-SH + 2 reduced [2Fe-2S]-[ferredoxin] + 2 S-adenosyl-L-methionine = (sulfur carrier)-H + biotin + 2 5'-deoxyadenosine + 2 L-methionine + 2 oxidized [2Fe-2S]-[ferredoxin]. The protein operates within cofactor biosynthesis; biotin biosynthesis; biotin from 7,8-diaminononanoate: step 2/2. Catalyzes the conversion of dethiobiotin (DTB) to biotin by the insertion of a sulfur atom into dethiobiotin via a radical-based mechanism. The protein is Biotin synthase of Salinispora arenicola (strain CNS-205).